A 255-amino-acid chain; its full sequence is Flap endonuclease Xni (255 aa).

D105 serves as a coordination point for Mg(2+). The 5'-3' exonuclease domain maps to 163 to 253; the sequence is QYQMLDFIAL…NLKQFRINPI (91 aa). K(+)-binding residues include L172, A173, P181, I183, and I186. Residues 185–190 are interaction with DNA; the sequence is GIGPKS.

It belongs to the Xni family. Mg(2+) is required as a cofactor. K(+) serves as cofactor.

Has flap endonuclease activity. During DNA replication, flap endonucleases cleave the 5'-overhanging flap structure that is generated by displacement synthesis when DNA polymerase encounters the 5'-end of a downstream Okazaki fragment. This Shewanella frigidimarina (strain NCIMB 400) protein is Flap endonuclease Xni.